Consider the following 85-residue polypeptide: YcgL domain-containing protein PC1_1941 (85 aa).

Residues 1–85 form the YcgL domain; that stretch reads MFCVIYRSAK…PVENLLNTPV (85 aa).

The polypeptide is YcgL domain-containing protein PC1_1941 (Pectobacterium carotovorum subsp. carotovorum (strain PC1)).